A 340-amino-acid polypeptide reads, in one-letter code: Cysteinyl leukotriene receptor 1 (340 aa).

The Extracellular portion of the chain corresponds to 1–31 (MDETGNPTIPPASNNTCYDSIDDFRNQVYST). N14 is a glycosylation site (N-linked (GlcNAc...) asparagine). Residues 32–52 (LYSMISVVGFFGNGFVLYVLV) traverse the membrane as a helical segment. The Cytoplasmic segment spans residues 53 to 60 (KTYHEKSA). Residues 61 to 81 (FQVYMINLAVADLLCVCTLPL) form a helical membrane-spanning segment. The Extracellular segment spans residues 82-109 (RVAYYVHKGIWLFGDFLCRLSTYALYVN). C99 and C176 are disulfide-bonded. Residues 110 to 130 (LYCSIFFMTAMSFFRCVAIVF) traverse the membrane as a helical segment. The Cytoplasmic segment spans residues 131 to 144 (PVQNISLVTQKKAR). Residues 145–165 (LVCIAIWMFVILTSSPFLMAN) traverse the membrane as a helical segment. Over 166-196 (TYKDEKNNTKCFEPPQDNQAKNYVLILHYVS) the chain is Extracellular. N-linked (GlcNAc...) asparagine glycosylation is present at N172. A helical membrane pass occupies residues 197-217 (LFIGFIIPFITIIVCYTMIIF). The Cytoplasmic segment spans residues 218–233 (TLLKSSMKKNLSSRKR). Residues 234–254 (AIGMIIVVTAAFLVSFMPYHI) form a helical membrane-spanning segment. Over 255–279 (QRTIHLHFLHNKTKPCDSILRMQKS) the chain is Extracellular. A glycan (N-linked (GlcNAc...) asparagine) is linked at N265. The helical transmembrane segment at 280–300 (VVITLSLAASNCCFDPLLYFF) threads the bilayer. Residues 301–340 (SGGNFRRRLSTIRKYSLSSMTYIPKKKTSLPQKGKDICKE) lie on the Cytoplasmic side of the membrane.

The protein belongs to the G-protein coupled receptor 1 family.

The protein localises to the cell membrane. In terms of biological role, receptor for cysteinyl leukotrienes mediating bronchoconstriction of individuals with and without asthma. Stimulation by LTD4 results in the contraction and proliferation of smooth muscle, edema, eosinophil migration and damage to the mucus layer in the lung. This response is mediated via a G-protein that activates a phosphatidylinositol-calcium second messenger system. The sequence is that of Cysteinyl leukotriene receptor 1 (CYSLTR1) from Cavia porcellus (Guinea pig).